The sequence spans 942 residues: MLVTRGDRGGGERAPSRRPRCGLVPAGAAALLAGASCLCYGRSLRGEFVHDDVWAIVNNPDVRPGTPLRWAIFANDFWGKGLADSTSHKSYRPLCVLSFRLNIFLTGMNPFYFHAVNVILHCLVTLVLMYTCDKTVFKNRGLAFVTALLFAVHPVHTEAVAGIVGRADVLACLLFLLAFLSYQRSLDQGCAGQCFPTTASPFFLLLSLFLGTCAMLVKETGITVFGVCLVYDLFSPSHKQDKLSNGAVCQHSSGQPGSPQPSSQQAHPHRESRKQRFPHKDSWGGCHSPLPPEPKSSGFPMSPRAMWSLMRCLTGSTNRNFLLTLRPFLKRAILVISYVTVILYFRLWIMGGTMPLFSEQDNPASFSPYILTRFLTYSYLLAFNVWLLLAPITLCYDWQVGSIPLVETIWDVRNLATILLAVVMALLSLHCVAAFKRLEHKEVLAGLLFLVFPFIPASNLFFRVGFVVAERVLYMPSMGYCILFVHGLSKLCAGLSRCGATSLMASTVLLLLLFSWKTVKQNEIWLSRESLFRSGVQTLPHNAKVHYNYANFLKDQGRNKEAIYHYRTALKLYPRHASALNNLGTLTKDMAEAKMYYQKALQLHPQHNRALFNLGNLLKSQEKTEEAIMLLKESIKYGPDFADAYSSLASLLAEQERFKEAEDIYQAGIKNCPDSSDLHNNYAVFLVDSGFPEKAVAHYQQAIQLSPSHHVAVVNLGRLYRSLGENSKAEEWYRRALKVARTAEVLSPLGALYYNTGRHKEALEVYREAVSLQPSQRELRLALAQVLAVMGQTKEAEKITSHIVSEEPRCLECYRLLSAIHSKQEHHGKALEAIEKALQLKPKDPKVISELFFTKGNQLREQNLLDKAFESYEAAVTLDPDQAQAWMNMGGIRHIQGSYVSARAYYERALKLVPDSKLLKENLAKLDRLERRLQEVRERDQT.

Over Met1–Arg20 the chain is Cytoplasmic. Residues Cys21–Gly41 form a helical membrane-spanning segment. Residues Arg42–Asn109 are Extracellular-facing. Residues Pro110–Tyr130 traverse the membrane as a helical segment. Residues Thr131–Arg140 are Cytoplasmic-facing. The helical transmembrane segment at Gly141–Thr157 threads the bilayer. Residues Glu158–Ala159 lie on the Extracellular side of the membrane. Residues Val160–Leu180 traverse the membrane as a helical segment. Residues Ser181–Pro196 lie on the Cytoplasmic side of the membrane. A helical membrane pass occupies residues Thr197 to Val217. Over Lys218–Arg331 the chain is Extracellular. A disordered region spans residues Asn245–Gly285. The segment covering Gln250–Ala266 has biased composition (low complexity). The chain crosses the membrane as a helical span at residues Ala332–Gly352. Residues Thr353 to Arg373 lie on the Cytoplasmic side of the membrane. Residues Phe374–Leu394 traverse the membrane as a helical segment. Residues Cys395 to Asn414 lie on the Extracellular side of the membrane. The helical transmembrane segment at Leu415–Phe435 threads the bilayer. Over Lys436–Lys441 the chain is Cytoplasmic. A helical transmembrane segment spans residues Glu442 to Phe462. A topological domain (extracellular) is located at residue Arg463. A helical membrane pass occupies residues Val464–Phe484. Topologically, residues Val485–Cys498 are cytoplasmic. Residues Gly499–Val519 form a helical membrane-spanning segment. Topologically, residues Lys520–Thr942 are extracellular. TPR repeat units follow at residues Ala543 to His576, Ala577 to His607, Asn608 to Phe641, Ala642 to Ser675, Ser676 to His709, His710 to Thr742, Ala743 to Gln776, Arg777 to Cys810, Leu811 to Asp844, Ser849 to Gln882, and Ala883 to Ser916.

This sequence belongs to the TMTC family. As to quaternary structure, may interact with FAM168B.

The protein resides in the membrane. It localises to the endoplasmic reticulum. It carries out the reaction a di-trans,poly-cis-dolichyl beta-D-mannosyl phosphate + L-seryl-[protein] = 3-O-(alpha-D-mannosyl)-L-seryl-[protein] + a di-trans,poly-cis-dolichyl phosphate + H(+). The enzyme catalyses a di-trans,poly-cis-dolichyl beta-D-mannosyl phosphate + L-threonyl-[protein] = 3-O-(alpha-D-mannosyl)-L-threonyl-[protein] + a di-trans,poly-cis-dolichyl phosphate + H(+). It participates in protein modification; protein glycosylation. In terms of biological role, transfers mannosyl residues to the hydroxyl group of serine or threonine residues. The 4 members of the TMTC family are O-mannosyl-transferases dedicated primarily to the cadherin superfamily, each member seems to have a distinct role in decorating the cadherin domains with O-linked mannose glycans at specific regions. Also acts as O-mannosyl-transferase on other proteins such as PDIA3. This is Protein O-mannosyl-transferase TMTC1 from Mus musculus (Mouse).